The following is a 154-amino-acid chain: 6,7-dimethyl-8-ribityllumazine synthase (154 aa).

5-amino-6-(D-ribitylamino)uracil is bound by residues Phe22, Ser56 to Glu58, and Val81 to Ile83. Glu86–Thr87 serves as a coordination point for (2S)-2-hydroxy-3-oxobutyl phosphate. His89 functions as the Proton donor in the catalytic mechanism. Residue Phe114 coordinates 5-amino-6-(D-ribitylamino)uracil. Residue Arg128 participates in (2S)-2-hydroxy-3-oxobutyl phosphate binding.

Belongs to the DMRL synthase family.

The enzyme catalyses (2S)-2-hydroxy-3-oxobutyl phosphate + 5-amino-6-(D-ribitylamino)uracil = 6,7-dimethyl-8-(1-D-ribityl)lumazine + phosphate + 2 H2O + H(+). It participates in cofactor biosynthesis; riboflavin biosynthesis; riboflavin from 2-hydroxy-3-oxobutyl phosphate and 5-amino-6-(D-ribitylamino)uracil: step 1/2. Catalyzes the formation of 6,7-dimethyl-8-ribityllumazine by condensation of 5-amino-6-(D-ribitylamino)uracil with 3,4-dihydroxy-2-butanone 4-phosphate. This is the penultimate step in the biosynthesis of riboflavin. The protein is 6,7-dimethyl-8-ribityllumazine synthase of Chlamydia felis (strain Fe/C-56) (Chlamydophila felis).